Here is a 297-residue protein sequence, read N- to C-terminus: Heme A synthase (297 aa).

Over 1-6 the chain is Cytoplasmic; sequence MNRKLS. Residues 7 to 27 traverse the membrane as a helical segment; sequence IFSAFVTFTMMIVLLMGGTVT. Over 28-62 the chain is Extracellular; sequence KTDSGNGCGTDWPLCHGELIPTNPSVETMIEYSHR. A disulfide bridge links C35 with C42. E58 is a catalytic residue. H61 is a heme o binding site. A helical transmembrane segment spans residues 63 to 83; it reads AVTGVVGLLIIALCLWTLVAF. At 84–90 the chain is on the cytoplasmic side; it reads KDRLDIK. A helical transmembrane segment spans residues 91 to 111; it reads IFAFLAFIFMLIQSIVGAGAV. The Extracellular portion of the chain corresponds to 112–121; that stretch reads VWQQSDLVMA. A helical transmembrane segment spans residues 122–142; the sequence is LHFGISLISFASLLILTILIM. Position 123 (H123) interacts with heme o. Over 143 to 160 the chain is Cytoplasmic; the sequence is ERSGQEFRESVPAFLRKL. Residues 161 to 181 form a helical membrane-spanning segment; it reads LYGLLIYTLIVVYTGAFVRHV. The Extracellular portion of the chain corresponds to 182-201; the sequence is GATYACVGWPVCSQPTMTFE. C187 and C193 are oxidised to a cystine. A helical transmembrane segment spans residues 202-222; the sequence is AWVQMIHRILAGLLFFYTLFV. Heme b is bound at residue H208. Residues 223-236 are Cytoplasmic-facing; the sequence is HYTAIRLKHRTSRT. Residues 237 to 257 traverse the membrane as a helical segment; it reads GMLFATFFISCQVATGAWIVL. Residues 258–262 lie on the Extracellular side of the membrane; it reads GGHAT. Residues 263–283 traverse the membrane as a helical segment; it reads YVPLLHAFLITCYFGVISYLA. H268 contributes to the heme b binding site. The Cytoplasmic portion of the chain corresponds to 284-297; that stretch reads YHAFRTRKKDSRLR.

It belongs to the COX15/CtaA family. Type 1 subfamily. As to quaternary structure, interacts with CtaB. Heme b serves as cofactor.

The protein resides in the cell membrane. It carries out the reaction Fe(II)-heme o + 2 A + H2O = Fe(II)-heme a + 2 AH2. It functions in the pathway porphyrin-containing compound metabolism; heme A biosynthesis; heme A from heme O: step 1/1. Its function is as follows. Catalyzes the conversion of heme O to heme A by two successive hydroxylations of the methyl group at C8. The first hydroxylation forms heme I, the second hydroxylation results in an unstable dihydroxymethyl group, which spontaneously dehydrates, resulting in the formyl group of heme A. This Exiguobacterium sibiricum (strain DSM 17290 / CCUG 55495 / CIP 109462 / JCM 13490 / 255-15) protein is Heme A synthase.